The primary structure comprises 755 residues: MAVDIKKIIKQMTLEEKAGLCSGLDFWHTKPVERLGIPSIMMTDGPHGLRKQREDAEIADINNSVPATCFPSAAGLACSWDRELVERVGAALGEECQAENVSILLGPGANIKRSPLCGRNFEYFSEDPYLSSELAASHIKGVQSQGVGACLKHFAANNQEHRRMTVDTIVDERTLREIYFASFENAVKKARPWVVMCAYNKLNGEYCSENRYLLTEVLKNEWMHDGFVVSDWGAVNDRVSGLDAGLDLEMPTSHGITDKKIVEAVKSGKLSENILNRAVERILKVIFMALENKKENAQYDKDAHHRLARQAAAESMVLLKNEDDVLPLKKSGTIALIGAFVKKPRYQGSGSSHITPTRLDDIYEEIKKAGGDKVNLVYSEGYRLENDGIDEELINEAKKAASSSDVAVVFAGLPDEYESEGFDRTHMSIPENQNRLIEAVAEVQSNIVVVLLNGSPVEMPWIDKVKSVLEAYLGGQALGGALADVLFGEVNPSGKLAETFPVKLSHNPSYLNFPGEDDRVEYKEGLFVGYRYYDTKGIEPLFPFGHGLSYTKFEYSDISVDKKDVSDNSIINVSVKVKNVGKMAGKEIVQLYVKDVKSSVRRPEKELKGFEKVFLNPGEEKTVTFTLDKRAFAYYNTQIKDWHVESGEFLILIGRSSRDIVLKESVRVNSTVKIRKRFTVNSAVEDVMSDSSAAAVLGPVLKEITDALQIDMDNAHDMMAANIKNMPLRSLVGYSQGRLSEEMLEELVDKINNVE.

Aspartate 231 is an active-site residue.

Belongs to the glycosyl hydrolase 3 family.

The catalysed reaction is Hydrolysis of terminal, non-reducing beta-D-glucosyl residues with release of beta-D-glucose.. It participates in glycan metabolism; cellulose degradation. This Acetivibrio thermocellus (strain ATCC 27405 / DSM 1237 / JCM 9322 / NBRC 103400 / NCIMB 10682 / NRRL B-4536 / VPI 7372) (Clostridium thermocellum) protein is Thermostable beta-glucosidase B (bglB).